The sequence spans 732 residues: Formin-homology and zinc finger domains protein 1 (732 aa).

Composition is skewed to low complexity over residues 1-12 (MMLASSAPTAPS), 19-45 (QPSA…SDAS), 121-137 (QQQQ…QSSS), and 240-251 (SSPKSPTSPTQP). The N-terminal stretch at 1–27 (MMLASSAPTAPSLLPPSSQPSAATTRA) is a signal peptide. 3 disordered regions span residues 1–45 (MMLA…SDAS), 121–141 (QQQQ…SDRK), and 232–267 (RGRP…RRNT). Residues 256 to 267 (SQASSLPSRRNT) show a composition bias toward polar residues. The 378-residue stretch at 355–732 (PISLSSSIIP…DDHHINVSSP (378 aa)) folds into the FH2 domain.

The protein belongs to the formin homology family. In terms of tissue distribution, transiently expressed in all mesoderm derived progenitor body wall muscle cells before they differentiate.

Its function is as follows. Acts redundantly with hlh-1 to promote body wall muscle cell and coelomocyte specification in postembryonic mesoderm progenitors, probably through suppression of sem-2. This is Formin-homology and zinc finger domains protein 1 from Caenorhabditis elegans.